The following is a 320-amino-acid chain: Lipoyl synthase (320 aa).

Cys-67, Cys-72, Cys-78, Cys-93, Cys-97, Cys-100, and Ser-307 together coordinate [4Fe-4S] cluster. Positions 79–296 (FNHGTATFMI…RDKANEMGFE (218 aa)) constitute a Radical SAM core domain.

This sequence belongs to the radical SAM superfamily. Lipoyl synthase family. It depends on [4Fe-4S] cluster as a cofactor.

It localises to the cytoplasm. The enzyme catalyses [[Fe-S] cluster scaffold protein carrying a second [4Fe-4S](2+) cluster] + N(6)-octanoyl-L-lysyl-[protein] + 2 oxidized [2Fe-2S]-[ferredoxin] + 2 S-adenosyl-L-methionine + 4 H(+) = [[Fe-S] cluster scaffold protein] + N(6)-[(R)-dihydrolipoyl]-L-lysyl-[protein] + 4 Fe(3+) + 2 hydrogen sulfide + 2 5'-deoxyadenosine + 2 L-methionine + 2 reduced [2Fe-2S]-[ferredoxin]. Its pathway is protein modification; protein lipoylation via endogenous pathway; protein N(6)-(lipoyl)lysine from octanoyl-[acyl-carrier-protein]: step 2/2. Catalyzes the radical-mediated insertion of two sulfur atoms into the C-6 and C-8 positions of the octanoyl moiety bound to the lipoyl domains of lipoate-dependent enzymes, thereby converting the octanoylated domains into lipoylated derivatives. This Haemophilus influenzae (strain 86-028NP) protein is Lipoyl synthase.